Consider the following 269-residue polypeptide: Probable molybdenum ABC transporter permease protein HVO_B0370 (269 aa).

6 consecutive transmembrane segments (helical) span residues 26–46 (LLLA…LVFA), 69–89 (VVAA…LAYW), 100–120 (VILA…GMLL), 140–160 (SLFG…VVTA), 198–218 (ILAG…ATLM), and 243–263 (FPVA…VHAL). One can recognise an ABC transmembrane type-1 domain in the interval 65 to 258 (ATNSVVAATL…LVGIAVGAIL (194 aa)).

This sequence belongs to the binding-protein-dependent transport system permease family. The complex is composed of two ATP-binding proteins, two transmembrane proteins (HVO_B0370) and a solute-binding protein (HVO_B0369).

The protein resides in the cell membrane. In terms of biological role, part of an ABC transporter complex involved in molybdenum import. Responsible for the translocation of the substrate across the membrane. This chain is Probable molybdenum ABC transporter permease protein HVO_B0370, found in Haloferax volcanii (strain ATCC 29605 / DSM 3757 / JCM 8879 / NBRC 14742 / NCIMB 2012 / VKM B-1768 / DS2) (Halobacterium volcanii).